A 915-amino-acid polypeptide reads, in one-letter code: Transferrin-binding protein A (915 aa).

The N-terminal stretch at 1-24 (MQQQHLFRFNILCLSLMTALPAYA) is a signal peptide. At 25 to 187 (ENVQAGQAQE…ADDVIGEGRQ (163 aa)) the chain is on the periplasmic side. Positions 38–45 (DTIQVKAK) match the TonB box motif. Residues 51–176 (RDNEVTGLGK…LAGSVAFQTK (126 aa)) enclose the TBDR plug domain. The tract at residues 121-139 (SYTAQAALGGTRTAGSSGA) is plug loop, interacts with transferrin. The TBDR beta-barrel domain occupies 187–915 (QWGIQSKTAY…NYTFSLEMKF (729 aa)). Residues 188-197 (WGIQSKTAYS) form a beta stranded membrane-spanning segment. At 198-203 (GKNRGL) the chain is on the extracellular side. Residues 204 to 213 (TQSIALAGRI) form a beta stranded membrane-spanning segment. At 214–215 (GG) the chain is on the periplasmic side. Residues 216-225 (AEALLIHTGR) traverse the membrane as a beta stranded segment. At 226–309 (RAGEIRAHED…FLADPLSYES (84 aa)) the chain is on the extracellular side. The chain crosses the membrane as a beta stranded span at residues 310–319 (RSWLFRPGFR). At 320 to 324 (FENKR) the chain is on the periplasmic side. A beta stranded transmembrane segment spans residues 325-334 (HYIGGILEHT). Residues 335–406 (QQTFDTRDMT…VFYDETHTKS (72 aa)) are Extracellular-facing. The interval 351–361 (KAVFDANKKQA) is L3 helix finger, interacts with transferrin. A beta stranded transmembrane segment spans residues 407–415 (RYGLEYVYT). The Periplasmic segment spans residues 416–423 (NADKDTWA). Residues 424 to 433 (DYARLSYDRQ) form a beta stranded membrane-spanning segment. Topologically, residues 434 to 478 (GIGLDNHFQQTHCSADGSDKYCRPSADKPFSYYKSDRVIYGESHR) are extracellular. The beta stranded transmembrane segment at 479–488 (LLQAAFKKSF) threads the bilayer. Topologically, residues 489–494 (DTAKIR) are periplasmic. A beta stranded transmembrane segment spans residues 495 to 504 (HNLSVNLGFD). Topologically, residues 505 to 583 (RFGSNLRHQD…PRSINGKSYY (79 aa)) are extracellular. A disordered region spans residues 523-542 (AYSSNTPPQNNGKKISPNGS). The chain crosses the membrane as a beta stranded span at residues 584-592 (AAVRDNVRL). Topologically, residues 593–594 (GR) are periplasmic. A beta stranded transmembrane segment spans residues 595 to 603 (WADVGAGLR). Residues 604 to 623 (YDYRSTHSDDGSVSTGTHRT) lie on the Extracellular side of the membrane. Residues 624-633 (LSWNAGIVLK) form a beta stranded membrane-spanning segment. Over 634 to 637 (PTDW) the chain is Periplasmic. The chain crosses the membrane as a beta stranded span at residues 638-647 (LDLTYRTSTG). The Extracellular portion of the chain corresponds to 648-675 (FRLPSFAEMYGWRAGVQSKAVKIDPEKS). A beta stranded membrane pass occupies residues 676-685 (FNKEAGIVFK). The Periplasmic segment spans residues 686–689 (GDFG). A beta stranded transmembrane segment spans residues 690 to 699 (NLEASWFNNA). At 700–733 (YRDLIVRGYEAQIKDGKEEAKGDPAYLNAQSARI) the chain is on the extracellular side. A beta stranded transmembrane segment spans residues 734–743 (TGINILGKID). At 744–755 (WNGVWDKLPEGW) the chain is on the periplasmic side. Residues 756 to 765 (YSTFAYNRVR) form a beta stranded membrane-spanning segment. Over 766–790 (VRDIKKRADRTDIQSHLFDAIQPSR) the chain is Extracellular. Residues 791-799 (YVVGLGYDQ) traverse the membrane as a beta stranded segment. Over 800–802 (PEG) the chain is Periplasmic. The beta stranded transmembrane segment at 803–811 (KWGVNGMLT) threads the bilayer. The Extracellular segment spans residues 812-845 (YSKAKEITELLGSRALLNGNSRNTKATARRTRPW). The beta stranded transmembrane segment at 846–855 (YIVDVSGYYT) threads the bilayer. The Periplasmic segment spans residues 856–860 (VKKHF). A beta stranded membrane pass occupies residues 861–870 (TLRAGVYNLL). Topologically, residues 871–905 (NYRYVTWENVRQTAGGAVNQHKNVGVYNRYAAPGR) are extracellular. The TonB C-terminal box motif lies at 898-915 (NRYAAPGRNYTFSLEMKF). Residues 906–915 (NYTFSLEMKF) form a beta stranded membrane-spanning segment.

It belongs to the TonB-dependent receptor family. Binds both human apo- and holo-transferrin (TF), via the TF C-terminus. Forms a large complex with TF and TbpB.

Its subcellular location is the cell outer membrane. Neisseria acquires iron by extracting it from serum transferrin (TF) in its human host. Acts as a TF receptor and is required for TF utilization. Binds both apo- and holo-TF, via the TF C-terminus. The chain is Transferrin-binding protein A from Neisseria meningitidis serogroup B (strain ATCC BAA-335 / MC58).